The sequence spans 395 residues: MDLGIPDLLDAWLEPPEDIFSTGSVLELGLHCPPPEVPVTRLQEQGLQGWKSGGDRGCGLQESEPEDFLKLFIDPNEVYCSEASPGSDSGISEDPCHPDSPPAPRATSSPMLYEVVYEAGALERMQGETGPNVGLISIQLDQWSPAFMVPDSCMVSELPFDAHAHILPRAGTVAPVPCTTLLPCQTLFLTDEEKRLLGQEGVSLPSHLPLTKAEERVLKKVRRKIRNKQSAQDSRRRKKEYIDGLESRVAACSAQNQELQKKVQELERHNISLVAQLRQLQTLIAQTSNKAAQTSTCVLILLFSLALIILPSFSPFQSRPEAGSEDYQPHGVTSRNILTHKDVTENLETQVVESRLREPPGAKDANGSTRTLLEKMGGKPRPSGRIRSVLHADEM.

Over 1 to 295 (MDLGIPDLLD…QTSNKAAQTS (295 aa)) the chain is Cytoplasmic. Residues 82 to 108 (EASPGSDSGISEDPCHPDSPPAPRATS) are disordered. One can recognise a bZIP domain in the interval 217–280 (VLKKVRRKIR…ISLVAQLRQL (64 aa)). The interval 219-248 (KKVRRKIRNKQSAQDSRRRKKEYIDGLESR) is basic motif. A leucine-zipper region spans residues 259-280 (LQKKVQELERHNISLVAQLRQL). The chain crosses the membrane as a helical; Signal-anchor for type II membrane protein span at residues 296 to 316 (TCVLILLFSLALIILPSFSPF). Residues 317–395 (QSRPEAGSED…IRSVLHADEM (79 aa)) lie on the Lumenal side of the membrane. The tract at residues 355–395 (RLREPPGAKDANGSTRTLLEKMGGKPRPSGRIRSVLHADEM) is disordered. Asn366 carries N-linked (GlcNAc...) asparagine glycosylation.

Belongs to the bZIP family. ATF subfamily. As to quaternary structure, binds DNA as a dimer. In terms of processing, N-glycosylated in the C-terminal region. Post-translationally, controlled by regulated intramembrane proteolysis (RIP). Following ER stress a fragment containing the cytoplasmic transcription factor domain is released by proteolysis. The cleavage seems to be performed sequentially by site-1 and site-2 proteases (PS1 and PS2). PS1 cleavage may be suppressed by a determinant in the C-terminal region. According to PubMed:11830526, exclusively expressed in the prostate. Expressed in breast and prostate cancer cell lines. Expressed in prostatic luminal epithelial cells (at protein level). Expression is significantly more abundant in prostate cancer than in benign prostatic tissue (prostatic hyperplasia). According to PubMed:12111373, also expressed in brain, pancreas and skeletal muscle, and at lower levels in small intestine, testis, leukocyte and thymus.

The protein localises to the endoplasmic reticulum membrane. Its subcellular location is the golgi apparatus membrane. The protein resides in the nucleus. Transcriptional activator that may play a role in the unfolded protein response. Binds to the UPR element (UPRE) but not to CRE element. Preferentially binds DNA with to the consensus sequence 5'-T[GT]ACGT[GA][GT]-3' and has transcriptional activation activity from UPRE. Binds to NF-kappa-B site and has transcriptional activation activity from NF-kappa-B-containing regulatory elements. In Homo sapiens (Human), this protein is Cyclic AMP-responsive element-binding protein 3-like protein 4 (CREB3L4).